The primary structure comprises 522 residues: MNPQLASTILYCLFFFFLGIAAVLAFIQRQAVKRRERLDAEAEAVLESARREAETRGNQIIVDAREKALAIKAEADREVAAMRETEQIRDRKLDAREDQLASGQESLRKAQRGLESSQTRLAAQMRNLTEQRAELDRLVQESQRALEKVSGMTQEEAAEKLMQSLRQDLEHEIGSTVLKHQRELGRRVDAQAREMLLTAMQRYASVHTADTTTSTVGVPTDDMKGRIIGREGRNIRAFEKATGVDLIIDDTPGVVVVSGFDPVRREVARMSLEKLIADGRIHPSKIEETVEQAGKEIQAFILQKGQEAAGEVNVSGLHDRVIEMLGRLHFRTSYSQNVLRHSVEVAFLAGMMAEMIGLDGDLARRCGLLHDIGKAADHELEGGHPKIGADLLRRSKENDEVVHAAKGHHDEIVTEFPYTMLVATADACSASRPGARRESLERYVKRMEELESIAQRFDGVQQAYAISAGRELRVMVGSQQVSDERAAAICRDIASTFEKELTYPGEIKVTVVREARFTNTAK.

A helical membrane pass occupies residues 7-27; sequence STILYCLFFFFLGIAAVLAFI. Residues 212-272 form the KH domain; the sequence is TTSTVGVPTD…VRREVARMSL (61 aa). The HD domain maps to 338 to 431; that stretch reads VLRHSVEVAF…VATADACSAS (94 aa).

It belongs to the RNase Y family.

It localises to the cell membrane. Its function is as follows. Endoribonuclease that initiates mRNA decay. This chain is Ribonuclease Y, found in Rhodopirellula baltica (strain DSM 10527 / NCIMB 13988 / SH1).